Reading from the N-terminus, the 160-residue chain is Protein cornichon homolog 3 (160 aa).

Topologically, residues 1–10 (MAFTFAAFCY) are cytoplasmic. A helical transmembrane segment spans residues 11–31 (MLSLVLCAALIFFAIWHIIAF). Topologically, residues 32–72 (DELRTDFKSPIDQCNPVHARERLRNIERICFLLRKLVLPEY) are lumenal. The helical transmembrane segment at 73–93 (SIHSLFCIMFLCAQEWLTLGL) threads the bilayer. Over 94–138 (NVPLLFYHFWRYFHCPADSSELAYDPPVVMNADTLSYCQKEAWCK) the chain is Cytoplasmic. The chain crosses the membrane as a helical span at residues 139-159 (LAFYLLSFFYYLYCMIYTLVS). Position 160 (Ser-160) is a topological domain, lumenal.

This sequence belongs to the cornichon family. As to quaternary structure, acts as an auxiliary subunit for AMPA-selective glutamate receptors (AMPARs). Found in a complex with GRIA1, GRIA2, GRIA3, GRIA4, CNIH2, CACNG2, CACNG3, CACNG4, CACNG5, CACNG7 and CACNG8. In terms of tissue distribution, expression is up-regulated in dorsolateral prefrontal cortex of patients with schizophrenia (postmortem brain study).

Its subcellular location is the postsynaptic cell membrane. Regulates the trafficking and gating properties of AMPA-selective glutamate receptors (AMPARs). Promotes their targeting to the cell membrane and synapses and modulates their gating properties by regulating their rates of activation, deactivation and desensitization. This is Protein cornichon homolog 3 (CNIH3) from Homo sapiens (Human).